The chain runs to 230 residues: tRNA (cytidine-2'-O-)-methyltransferase TrmJ (230 aa).

Residues 79–81 (TSG), G115, I135, and 142–144 (PIM) contribute to the S-adenosyl-L-methionine site.

The protein belongs to the class IV-like SAM-binding methyltransferase superfamily. RNA methyltransferase TrmH family. Homodimer.

Its subcellular location is the cytoplasm. The catalysed reaction is cytidine(32) in tRNA + S-adenosyl-L-methionine = 2'-O-methylcytidine(32) in tRNA + S-adenosyl-L-homocysteine + H(+). Functionally, catalyzes the formation of 2'O-methylated cytidine (Cm32) at position 32 in tRNA. This chain is tRNA (cytidine-2'-O-)-methyltransferase TrmJ, found in Methanocaldococcus jannaschii (strain ATCC 43067 / DSM 2661 / JAL-1 / JCM 10045 / NBRC 100440) (Methanococcus jannaschii).